The primary structure comprises 195 residues: Pyruvoyl-dependent arginine decarboxylase AaxB (195 aa).

Ser-53 carries the pyruvic acid (Ser) modification.

Belongs to the pyruvoyl-dependent arginine decarboxylase family. In terms of assembly, trimer of an alpha-beta dimer. Pyruvate is required as a cofactor.

Its subcellular location is the cytoplasm. It carries out the reaction L-arginine + H(+) = agmatine + CO2. Part of the AaxABC system, catalyzes the decarboxylation of L-arginine. The arginine uptake by the bacterium in the macrophage may be a virulence factor against the host innate immune response. The protein is Pyruvoyl-dependent arginine decarboxylase AaxB (aaxB) of Chlamydia caviae (strain ATCC VR-813 / DSM 19441 / 03DC25 / GPIC) (Chlamydophila caviae).